Here is a 482-residue protein sequence, read N- to C-terminus: MSGFRGLVPELENSLWSSPTTSCMSKMCWWLLWGILHTCPTQASVLLAQQSPQQLTSPGYPEPYLKGQESHTDIEAPEGFAVRLTFQDFDLEPSPDCEGDSVTISTGGTDATRLCGRQGSPLGNPPGHREFVSSGRSLRLTFQAHSSSKSKITHLHKGFLALYQAVAVNQPNGDTEAVTTPGAPKIQNHCQDPYYKADQTGTLSCPSSWKWKDRQDGGEVPECVPVCGRPVVPLAENPNTFGSSRAKLGNFPWQAFTSIYGRGGGALLGDRWILTAAHTIYPKDSIYLRRNQNVEVFLGHTDIDELLKLGNHPVRRVVVHPDYRQHESHNFNGDIALLELEQRVPLGPNLLPVCLPDNETLYHSGLWGYVSGFGVEMGWLTTKLKYSKLPVAPREACEAWLHQRQRTEVFSDNMFCVGEEMQVNSVCQGDSGSVYVVWDDLALRWVATGIVSWGIGCGKGYGFYTKVLSYMDWIKRVIEGKD.

Positions 1–43 are cleaved as a signal peptide; that stretch reads MSGFRGLVPELENSLWSSPTTSCMSKMCWWLLWGILHTCPTQA. Residues 44–166 form the CUB domain; sequence SVLLAQQSPQ…KGFLALYQAV (123 aa). Disulfide bonds link Cys97–Cys115 and Cys190–Cys223. The Sushi domain maps to 166 to 225; the sequence is VAVNQPNGDTEAVTTPGAPKIQNHCQDPYYKADQTGTLSCPSSWKWKDRQDGGEVPECVP. Positions 240 to 479 constitute a Peptidase S1 domain; it reads TFGSSRAKLG…YMDWIKRVIE (240 aa). Catalysis depends on charge relay system residues His278 and Asp334. The N-linked (GlcNAc...) asparagine glycan is linked to Asn358. Disulfide bonds link Cys397-Cys416 and Cys427-Cys457. Ser431 acts as the Charge relay system in catalysis.

It belongs to the peptidase S1 family. Expressed in liver (at protein level).

The protein resides in the secreted. In terms of biological role, mediates the proteolytic cleavage of HP/haptoglobin in the endoplasmic reticulum. The protein is Complement C1r subcomponent-like protein (C1rl) of Mus musculus (Mouse).